We begin with the raw amino-acid sequence, 660 residues long: Acyl-coenzyme A oxidase acox-1.3 (660 aa).

Residues 146–149, 154–155, and Gly188 each bind FAD; these read YAQT and GT. Substrate contacts are provided by residues 282–285 and Arg292; that span reads KIGY. Residues Arg317 and 337-340 contribute to the FAD site; that span reads QQHR. ATP contacts are provided by His339, Ser389, His393, and Gln401. Position 430–431 (430–431) interacts with substrate; it reads YE. Glu431 serves as the catalytic Proton acceptor. Glu433 provides a ligand contact to FAD. Residues 524 to 527 and Tyr572 each bind ATP; that span reads RASR. Residues 658 to 660 carry the Microbody targeting signal motif; sequence AKL.

Belongs to the acyl-CoA oxidase family. As to quaternary structure, forms a heterodimer with acox-1.1; the interaction may be important for the stability of acox-1.3. It depends on FAD as a cofactor.

The protein localises to the peroxisome. It carries out the reaction asc-C7-CoA + O2 = asc-DeltaC7-CoA + H2O2. Its pathway is lipid metabolism; peroxisomal fatty acid beta-oxidation. Its activity is regulated as follows. Activated by ATP. ATP binding leads to a conformational change that promotes FAD cofactor binding and enzyme activity. ATP binding likely occurs during acox-1.3 folding and/or dimer formation. In terms of biological role, involved in the first step of peroxisomal beta-oxidation by catalyzing the desaturation of fatty acid-derived side chains of ascaroside pheromones, which regulates development and behavior. Specifically, shortens ascarosides with a 7-carbon side chain (asc-C7). Does not catalyze the desaturation of fatty acids or hydroxylated fatty acids. Involved in the biosynthesis of asc-C6-MK (daumone 2) and asc-delta-C9 (daumone 3) but not asc-C7 (daumone 1); daumones are pheromones produced during unfavourable growth conditions which promote entry into the dauer stage. This chain is Acyl-coenzyme A oxidase acox-1.3, found in Caenorhabditis elegans.